Consider the following 175-residue polypeptide: ATP synthase subunit b (175 aa).

Residues leucine 13–leucine 33 traverse the membrane as a helical segment.

Belongs to the ATPase B chain family. In terms of assembly, F-type ATPases have 2 components, F(1) - the catalytic core - and F(0) - the membrane proton channel. F(1) has five subunits: alpha(3), beta(3), gamma(1), delta(1), epsilon(1). F(0) has four main subunits: a(1), b(2) and c(10-14). The alpha and beta chains form an alternating ring which encloses part of the gamma chain. F(1) is attached to F(0) by a central stalk formed by the gamma and epsilon chains, while a peripheral stalk is formed by the delta and b chains.

The protein localises to the cell inner membrane. F(1)F(0) ATP synthase produces ATP from ADP in the presence of a proton or sodium gradient. F-type ATPases consist of two structural domains, F(1) containing the extramembraneous catalytic core and F(0) containing the membrane proton channel, linked together by a central stalk and a peripheral stalk. During catalysis, ATP synthesis in the catalytic domain of F(1) is coupled via a rotary mechanism of the central stalk subunits to proton translocation. In terms of biological role, component of the F(0) channel, it forms part of the peripheral stalk, linking F(1) to F(0). This is ATP synthase subunit b from Chloroherpeton thalassium (strain ATCC 35110 / GB-78).